The following is a 546-amino-acid chain: Oncoprotein-induced transcript 3 protein (546 aa).

The N-terminal stretch at 1 to 19 (MPLSLLLTCLSTTVTLVSP) is a signal peptide. N-linked (GlcNAc...) asparagine glycosylation is found at Asn-89 and Asn-116. In terms of domain architecture, EGF-like; calcium-binding spans 182–222 (DENECEHNNGGCSEICVNLKNSHRCACGVGRVLRSDGKTCE). Cystine bridges form between Cys-186-Cys-197, Cys-193-Cys-206, and Cys-208-Cys-221. Residues 261–516 (TCQVPVLCKS…SRCAQGCHRR (256 aa)) enclose the ZP domain. Asn-299 is a glycosylation site (N-linked (GlcNAc...) asparagine).

In terms of tissue distribution, liver-specific. Expressed only in the hepatocytes.

It is found in the nucleus envelope. Functionally, may be involved in hepatocellular function and development. The polypeptide is Oncoprotein-induced transcript 3 protein (Oit3) (Mus musculus (Mouse)).